A 618-amino-acid chain; its full sequence is Uptake hydrogenase large subunit (618 aa).

Ni(2+)-binding residues include cysteine 75, cysteine 78, cysteine 597, and cysteine 600.

It belongs to the [NiFe]/[NiFeSe] hydrogenase large subunit family. In terms of assembly, heterodimer of a large and a small subunit. Ni(2+) is required as a cofactor.

The protein localises to the cell membrane. The catalysed reaction is H2 + A = AH2. In terms of biological role, this enzyme recycles the H(2) produced by nitrogenase to increase the production of ATP and to protect nitrogenase against inhibition or damage by O(2) under carbon- or phosphate-limited conditions. In Cupriavidus necator (strain ATCC 17699 / DSM 428 / KCTC 22496 / NCIMB 10442 / H16 / Stanier 337) (Ralstonia eutropha), this protein is Uptake hydrogenase large subunit (hoxG).